Here is a 70-residue protein sequence, read N- to C-terminus: Conotoxin Pl171 (70 aa).

The signal sequence occupies residues 1–21 (MGMRMMFTMILLVVLVTTVVS). 2 cysteine pairs are disulfide-bonded: C54–C61 and C55–C67. F69 bears the Phenylalanine amide mark.

It belongs to the conotoxin A superfamily. As to expression, expressed by the venom duct.

The protein resides in the secreted. Functionally, probable neurotoxin with unknown target. Possibly targets ion channels. The sequence is that of Conotoxin Pl171 from Conus planorbis (Planorbis cone).